The primary structure comprises 104 residues: Replication restart protein PriB (104 aa).

Residues methionine 1–aspartate 101 enclose the SSB domain.

It belongs to the PriB family. Homodimer. Interacts with PriA and DnaT. Component of the replication restart primosome. Primosome assembly occurs via a 'hand-off' mechanism. PriA binds to replication forks, subsequently PriB then DnaT bind; DnaT then displaces ssDNA to generate the helicase loading substrate.

Involved in the restart of stalled replication forks, which reloads the replicative helicase on sites other than the origin of replication; the PriA-PriB pathway is the major replication restart pathway. During primosome assembly it facilitates complex formation between PriA and DnaT on DNA; stabilizes PriA on DNA. Stimulates the DNA unwinding activity of PriA helicase. The polypeptide is Replication restart protein PriB (Salmonella agona (strain SL483)).